A 281-amino-acid polypeptide reads, in one-letter code: uncharacterized protein (281 aa).

Helical transmembrane passes span 8 to 28 (ALPV…FIWS), 97 to 117 (LAVA…RGYG), 147 to 167 (PARI…GLAV), and 210 to 230 (IASV…IVPA).

It to S.pombe bem46 and yeast YNL320w.

It localises to the cell membrane. This is an uncharacterized protein from Mycobacterium tuberculosis (strain CDC 1551 / Oshkosh).